The sequence spans 276 residues: Large ribosomal subunit protein uL2 (276 aa).

Disordered stretches follow at residues 1–20 and 219–276; these read MGIKKYNPTTNGRRNMTTND and TVRG…RRKK. Over residues 7–20 the composition is skewed to polar residues; it reads NPTTNGRRNMTTND.

This sequence belongs to the universal ribosomal protein uL2 family. As to quaternary structure, part of the 50S ribosomal subunit. Forms a bridge to the 30S subunit in the 70S ribosome.

In terms of biological role, one of the primary rRNA binding proteins. Required for association of the 30S and 50S subunits to form the 70S ribosome, for tRNA binding and peptide bond formation. It has been suggested to have peptidyltransferase activity; this is somewhat controversial. Makes several contacts with the 16S rRNA in the 70S ribosome. In Bacillus anthracis (strain A0248), this protein is Large ribosomal subunit protein uL2.